A 236-amino-acid chain; its full sequence is Uridylate kinase (236 aa).

12–15 lines the ATP pocket; it reads KLSG. An involved in allosteric activation by GTP region spans residues 20–25; it reads GEKGFG. Gly54 is a UMP binding site. Positions 55 and 59 each coordinate ATP. UMP-binding positions include Asp72 and 133–140; that span reads TGNPYFST. Residues Asn161, Tyr166, and Asp169 each coordinate ATP.

The protein belongs to the UMP kinase family. As to quaternary structure, homohexamer.

It is found in the cytoplasm. The enzyme catalyses UMP + ATP = UDP + ADP. It functions in the pathway pyrimidine metabolism; CTP biosynthesis via de novo pathway; UDP from UMP (UMPK route): step 1/1. With respect to regulation, allosterically activated by GTP. Inhibited by UTP. In terms of biological role, catalyzes the reversible phosphorylation of UMP to UDP. The polypeptide is Uridylate kinase (Alkaliphilus metalliredigens (strain QYMF)).